A 129-amino-acid polypeptide reads, in one-letter code: Small ribosomal subunit protein uS11 (129 aa).

The protein belongs to the universal ribosomal protein uS11 family. Part of the 30S ribosomal subunit. Interacts with proteins S7 and S18. Binds to IF-3.

Located on the platform of the 30S subunit, it bridges several disparate RNA helices of the 16S rRNA. Forms part of the Shine-Dalgarno cleft in the 70S ribosome. The polypeptide is Small ribosomal subunit protein uS11 (Maridesulfovibrio salexigens (strain ATCC 14822 / DSM 2638 / NCIMB 8403 / VKM B-1763) (Desulfovibrio salexigens)).